The sequence spans 125 residues: Fluoride-specific ion channel FluC (125 aa).

A run of 4 helical transmembrane segments spans residues 5–25, 33–53, 69–89, and 101–121; these read FVFIALAGALGTLARYSLAGF, FFPFGTLVVNITGCFAAGFLW, FVLVGFMGAFTTFSAFILETG, and IVNLLLQNSLGFGALMAGIVL. Na(+) is bound by residues Gly76 and Thr79.

It belongs to the fluoride channel Fluc/FEX (TC 1.A.43) family.

It localises to the cell inner membrane. The enzyme catalyses fluoride(in) = fluoride(out). With respect to regulation, na(+) is not transported, but it plays an essential structural role and its presence is essential for fluoride channel function. Its function is as follows. Fluoride-specific ion channel. Important for reducing fluoride concentration in the cell, thus reducing its toxicity. This Desulforapulum autotrophicum (strain ATCC 43914 / DSM 3382 / VKM B-1955 / HRM2) (Desulfobacterium autotrophicum) protein is Fluoride-specific ion channel FluC.